The following is a 593-amino-acid chain: MFENQQQLLRLHGCKLFIIGENDNLVNKYGHSVAIACCYDPQGMSVRVFREGSQQQLEEYPVSVKTTHLNHGITSHILIVGGEMIYVKFASEEDCQSFRMLLQNMSGKVNSVFNLRTEDSSASQYFQFYGYLSQQQNMMQDFVRTSTYQRAIYSNSQDFHNKIVLDVGAGSGILSFFAVQAGAAKVYAVEASNMAQYAQQLVLSNNLDGKIIVIAGKIEEIELPEMVDIIISEPMGYMLYNERMLETYLHGKKWLRPEGKMFPSRGDLHVAPFTDEALYMEQYNKANFWMQTEFHGVNLVALRDAAMKEYFRQPIVDTFDIRICMAKSIRHTTNFLTADEKDLHRIQIDVEFHILETGTCHGLAFWFDVEFAGSCSQVWLSTAPTESLTHWYQVRCLLQTPIFVKQGQVLSGKVVLAANQRQSYDVEMDLKLEGTMITSTNTLDLKNPYFRYTGAPVPAPPGSNTTSPSEAYWGQLDAQGARNAVNLVNGITVNGLGEVDMTMINTNLMPIGNQPNIHPGLISSTGRQQSQQQTTPAQPLTMNPTIACAATSTQNVAQQQLIGGAISPSLFTTPTQQIINSHHAQPIHGAQFY.

The region spanning 122-429 (ASQYFQFYGY…QRQSYDVEMD (308 aa)) is the SAM-dependent MTase PRMT-type domain. S-adenosyl-L-methionine-binding residues include glutamine 135, arginine 144, glycine 168, glutamate 190, glutamate 219, and threonine 247. At arginine 482 the chain carries Asymmetric dimethylarginine; by autocatalysis. The tract at residues 521–540 (LISSTGRQQSQQQTTPAQPL) is disordered. Positions 523–535 (SSTGRQQSQQQTT) are enriched in low complexity.

The protein belongs to the class I-like SAM-binding methyltransferase superfamily. Protein arginine N-methyltransferase family. Homodimer. The dimethylated protein is the major form.

It is found in the cytoplasm. The protein localises to the nucleus. The catalysed reaction is L-arginyl-[protein] + 2 S-adenosyl-L-methionine = N(omega),N(omega)-dimethyl-L-arginyl-[protein] + 2 S-adenosyl-L-homocysteine + 2 H(+). Its function is as follows. Methylates (mono- and asymmetric dimethylation) the guanidino nitrogens of arginyl residues in proteins. May methylate histone H3 at 'Arg-17' and activate transcription via chromatin remodeling. In Aedes aegypti (Yellowfever mosquito), this protein is Histone-arginine methyltransferase CARMER.